We begin with the raw amino-acid sequence, 304 residues long: Cell surface-binding protein OPG105 (304 aa).

Positions 1-235 (MPQQLSPINI…NDDTQVYYSG (235 aa)) constitute an Alpha-carbonic anhydrase domain. Residues 1-275 (MPQQLSPINI…YQKYIEGNKT (275 aa)) are Virion surface-facing. Residues 276–294 (FAIIAIVFVFILTAILFLM) traverse the membrane as a helical segment. Residues 295-304 (SRRYSREKQN) lie on the Intravirion side of the membrane.

This sequence belongs to the alpha-carbonic anhydrase family. As to quaternary structure, homodimer; disulfide-linked. Post-translationally, apparently non-glycosylated.

It localises to the virion membrane. Functionally, binds to chondroitin sulfate on the cell surface to provide virion attachment to target cell. This Rabbitpox virus (strain Utrecht) (RPV) protein is Cell surface-binding protein OPG105 (OPG105).